A 305-amino-acid chain; its full sequence is Sulfate adenylyltransferase subunit 2 (305 aa).

The protein belongs to the PAPS reductase family. CysD subfamily. Heterodimer composed of CysD, the smaller subunit, and CysN.

It catalyses the reaction sulfate + ATP + H(+) = adenosine 5'-phosphosulfate + diphosphate. Its pathway is sulfur metabolism; hydrogen sulfide biosynthesis; sulfite from sulfate: step 1/3. With CysN forms the ATP sulfurylase (ATPS) that catalyzes the adenylation of sulfate producing adenosine 5'-phosphosulfate (APS) and diphosphate, the first enzymatic step in sulfur assimilation pathway. APS synthesis involves the formation of a high-energy phosphoric-sulfuric acid anhydride bond driven by GTP hydrolysis by CysN coupled to ATP hydrolysis by CysD. In Pseudomonas savastanoi pv. phaseolicola (strain 1448A / Race 6) (Pseudomonas syringae pv. phaseolicola (strain 1448A / Race 6)), this protein is Sulfate adenylyltransferase subunit 2.